Reading from the N-terminus, the 83-residue chain is Small ribosomal subunit protein uS17 (83 aa).

Belongs to the universal ribosomal protein uS17 family. As to quaternary structure, part of the 30S ribosomal subunit.

Functionally, one of the primary rRNA binding proteins, it binds specifically to the 5'-end of 16S ribosomal RNA. The chain is Small ribosomal subunit protein uS17 from Buchnera aphidicola subsp. Acyrthosiphon pisum (strain 5A).